The following is a 205-amino-acid chain: ATP phosphoribosyltransferase (205 aa).

This sequence belongs to the ATP phosphoribosyltransferase family. Short subfamily. In terms of assembly, heteromultimer composed of HisG and HisZ subunits.

It localises to the cytoplasm. The catalysed reaction is 1-(5-phospho-beta-D-ribosyl)-ATP + diphosphate = 5-phospho-alpha-D-ribose 1-diphosphate + ATP. Its pathway is amino-acid biosynthesis; L-histidine biosynthesis; L-histidine from 5-phospho-alpha-D-ribose 1-diphosphate: step 1/9. In terms of biological role, catalyzes the condensation of ATP and 5-phosphoribose 1-diphosphate to form N'-(5'-phosphoribosyl)-ATP (PR-ATP). Has a crucial role in the pathway because the rate of histidine biosynthesis seems to be controlled primarily by regulation of HisG enzymatic activity. The sequence is that of ATP phosphoribosyltransferase from Leptospira interrogans serogroup Icterohaemorrhagiae serovar Lai (strain 56601).